The chain runs to 415 residues: Imidazolonepropionase (415 aa).

Residues His-75 and His-77 each contribute to the Fe(3+) site. Residues His-75 and His-77 each contribute to the Zn(2+) site. 3 residues coordinate 4-imidazolone-5-propanoate: Arg-84, Tyr-147, and His-180. Tyr-147 contacts N-formimidoyl-L-glutamate. His-245 serves as a coordination point for Fe(3+). His-245 contacts Zn(2+). Residue Gln-248 coordinates 4-imidazolone-5-propanoate. Asp-320 lines the Fe(3+) pocket. Position 320 (Asp-320) interacts with Zn(2+). N-formimidoyl-L-glutamate contacts are provided by Asn-322 and Gly-324. Thr-325 is a binding site for 4-imidazolone-5-propanoate.

Belongs to the metallo-dependent hydrolases superfamily. HutI family. Zn(2+) serves as cofactor. The cofactor is Fe(3+).

It is found in the cytoplasm. It carries out the reaction 4-imidazolone-5-propanoate + H2O = N-formimidoyl-L-glutamate. It participates in amino-acid degradation; L-histidine degradation into L-glutamate; N-formimidoyl-L-glutamate from L-histidine: step 3/3. Its function is as follows. Catalyzes the hydrolytic cleavage of the carbon-nitrogen bond in imidazolone-5-propanoate to yield N-formimidoyl-L-glutamate. It is the third step in the universal histidine degradation pathway. This is Imidazolonepropionase from Photorhabdus laumondii subsp. laumondii (strain DSM 15139 / CIP 105565 / TT01) (Photorhabdus luminescens subsp. laumondii).